Consider the following 1414-residue polypeptide: Phenyloxazoline synthase MbtB (1414 aa).

Residues 5–78 (TACSEIIRAE…AWSQLVSAGT (74 aa)) form the Carrier 1 domain. At Ser39 the chain carries O-(pantetheine 4'-phosphoryl)serine. The tract at residues 96–394 (EGEPFPVAPM…SSLLLDVDLT (299 aa)) is condensation/cyclization. Positions 579–975 (SYAQLRDQAS…RLPGVHAAAA (397 aa)) are adenylation. One can recognise a Carrier 2 domain in the interval 1057 to 1135 (APRTVLQRAL…ALAQLLTGRE (79 aa)). Ser1094 carries the post-translational modification O-(pantetheine 4'-phosphoryl)serine. The segment at 1188 to 1413 (GAVLVFPHAG…AVARMVSADV (226 aa)) is thioesterase.

This sequence belongs to the ATP-dependent AMP-binding enzyme family. MbtB subfamily. Pantetheine 4'-phosphate serves as cofactor. Post-translationally, 4'-phosphopantetheine is transferred from CoA to a specific serine in each of the two carrier protein domains, leading to their activation from apo to holo forms.

It participates in siderophore biosynthesis; mycobactin biosynthesis. Involved in the initial steps of the mycobactin biosynthetic pathway. Putatively couples activated salicylic acid with serine or threonine and cyclizes this precursor to the hydroxyphenyloxazoline ring system present in this class of siderophores. Essential for growth in macrophages. This Mycobacterium tuberculosis (strain CDC 1551 / Oshkosh) protein is Phenyloxazoline synthase MbtB (mbtB).